The chain runs to 419 residues: Histidine--tRNA ligase (419 aa).

This sequence belongs to the class-II aminoacyl-tRNA synthetase family. As to quaternary structure, homodimer.

It localises to the cytoplasm. The enzyme catalyses tRNA(His) + L-histidine + ATP = L-histidyl-tRNA(His) + AMP + diphosphate + H(+). In Mycoplasmoides gallisepticum (strain R(low / passage 15 / clone 2)) (Mycoplasma gallisepticum), this protein is Histidine--tRNA ligase.